The chain runs to 304 residues: UDP-3-O-acyl-N-acetylglucosamine deacetylase (304 aa).

Zn(2+) is bound by residues His79, His238, and Asp242. His265 serves as the catalytic Proton donor.

This sequence belongs to the LpxC family. Zn(2+) serves as cofactor.

It carries out the reaction a UDP-3-O-[(3R)-3-hydroxyacyl]-N-acetyl-alpha-D-glucosamine + H2O = a UDP-3-O-[(3R)-3-hydroxyacyl]-alpha-D-glucosamine + acetate. It functions in the pathway glycolipid biosynthesis; lipid IV(A) biosynthesis; lipid IV(A) from (3R)-3-hydroxytetradecanoyl-[acyl-carrier-protein] and UDP-N-acetyl-alpha-D-glucosamine: step 2/6. Functionally, catalyzes the hydrolysis of UDP-3-O-myristoyl-N-acetylglucosamine to form UDP-3-O-myristoylglucosamine and acetate, the committed step in lipid A biosynthesis. This is UDP-3-O-acyl-N-acetylglucosamine deacetylase from Photobacterium profundum (strain SS9).